A 420-amino-acid polypeptide reads, in one-letter code: Serine--tRNA ligase (420 aa).

An L-serine-binding site is contributed by 228–230 (TAE). 259–261 (RSE) serves as a coordination point for ATP. Residue Glu-282 coordinates L-serine. 346-349 (EISS) contacts ATP. Ser-382 is a binding site for L-serine.

Belongs to the class-II aminoacyl-tRNA synthetase family. Type-1 seryl-tRNA synthetase subfamily. As to quaternary structure, homodimer. The tRNA molecule binds across the dimer.

It is found in the cytoplasm. It carries out the reaction tRNA(Ser) + L-serine + ATP = L-seryl-tRNA(Ser) + AMP + diphosphate + H(+). It catalyses the reaction tRNA(Sec) + L-serine + ATP = L-seryl-tRNA(Sec) + AMP + diphosphate + H(+). It participates in aminoacyl-tRNA biosynthesis; selenocysteinyl-tRNA(Sec) biosynthesis; L-seryl-tRNA(Sec) from L-serine and tRNA(Sec): step 1/1. In terms of biological role, catalyzes the attachment of serine to tRNA(Ser). Is also able to aminoacylate tRNA(Sec) with serine, to form the misacylated tRNA L-seryl-tRNA(Sec), which will be further converted into selenocysteinyl-tRNA(Sec). This chain is Serine--tRNA ligase, found in Mycoplasmoides gallisepticum (strain R(low / passage 15 / clone 2)) (Mycoplasma gallisepticum).